The sequence spans 176 residues: ATP-dependent protease subunit HslV (176 aa).

Residue Thr-5 is part of the active site. Na(+)-binding residues include Ser-161, Cys-164, and Thr-167.

Belongs to the peptidase T1B family. HslV subfamily. As to quaternary structure, a double ring-shaped homohexamer of HslV is capped on each side by a ring-shaped HslU homohexamer. The assembly of the HslU/HslV complex is dependent on binding of ATP.

It is found in the cytoplasm. It catalyses the reaction ATP-dependent cleavage of peptide bonds with broad specificity.. With respect to regulation, allosterically activated by HslU binding. Protease subunit of a proteasome-like degradation complex believed to be a general protein degrading machinery. The sequence is that of ATP-dependent protease subunit HslV from Thermoanaerobacter sp. (strain X514).